Consider the following 1206-residue polypeptide: DNA polymerase beta (1206 aa).

4 consecutive repeat copies span residues Ala1071 to Pro1074, Ala1075 to Pro1078, Ala1079 to Pro1082, and Ala1083 to Ala1086. A 4 X 4 AA tandem repeats of A-G-[NK]-[PA] region spans residues Ala1071–Ala1086.

It belongs to the DNA polymerase type-B family.

The enzyme catalyses DNA(n) + a 2'-deoxyribonucleoside 5'-triphosphate = DNA(n+1) + diphosphate. Functionally, DNA-directed DNA polymerase involved in viral DNA replication. The chain is DNA polymerase beta from Ornithodoros (relapsing fever ticks).